The following is a 782-amino-acid chain: LINE-1 type transposase domain-containing protein 1 (782 aa).

Disordered regions lie at residues 1 to 30 (MSGV…TATS), 90 to 200 (QEGD…GGAG), and 338 to 397 (NKGT…SAEE). Composition is skewed to basic and acidic residues over residues 11–27 (LQKE…ERKT) and 95–107 (ISER…KVEE). Ser-136 bears the Phosphoserine mark. Basic and acidic residues-rich tracts occupy residues 143–158 (SLER…HGRC) and 183–194 (EENRLKAPKESP). The span at 347–396 (GEEEEISETQGEETSEGETSELGEEEGSESEEEEESSESEEEEESSESAE) shows a compositional bias: acidic residues. Ser-407, Ser-409, Ser-442, Ser-478, Ser-490, Ser-559, and Ser-567 each carry phosphoserine.

Belongs to the transposase 22 family.

This is LINE-1 type transposase domain-containing protein 1 (L1td1) from Mus musculus (Mouse).